A 155-amino-acid chain; its full sequence is MDQAKLARLQQSVRIGTGKGTPRRKTKKVHKSSGTDDKKLQTSLKKLNVQPIQAIEEVNMFKEDGNVIHFAAPKVQASVPSNTFAIYGNGEEKELTELVPGILNQLGPDSLASLRKLAESYQNMQKKEGEAKKEGEEDDEDIPDLVGETFESKVE.

2 disordered regions span residues 1 to 39 (MDQA…DDKK) and 122 to 155 (QNMQ…SKVE). Positions 21 to 31 (TPRRKTKKVHK) are enriched in basic residues. The 66-residue stretch at 34-99 (GTDDKKLQTS…GEEKELTELV (66 aa)) folds into the NAC-A/B domain. Over residues 125–135 (QKKEGEAKKEG) the composition is skewed to basic and acidic residues.

It belongs to the NAC-beta family. As to quaternary structure, part of the nascent polypeptide-associated complex (NAC), consisting of EGD2 and EGD1. NAC associates with ribosomes via EGD1.

It is found in the cytoplasm. It localises to the nucleus. Component of the nascent polypeptide-associated complex (NAC), a dynamic component of the ribosomal exit tunnel, protecting the emerging polypeptides from interaction with other cytoplasmic proteins to ensure appropriate nascent protein targeting. The NAC complex also promotes mitochondrial protein import by enhancing productive ribosome interactions with the outer mitochondrial membrane and blocks the inappropriate interaction of ribosomes translating non-secretory nascent polypeptides with translocation sites in the membrane of the endoplasmic reticulum. EGD1 may act as a transcription factor that exert a negative effect on the expression of several genes that are transcribed by RNA polymerase II. The chain is Nascent polypeptide-associated complex subunit beta (EGD1) from Coccidioides immitis (strain RS) (Valley fever fungus).